Here is a 347-residue protein sequence, read N- to C-terminus: UDP-3-O-acylglucosamine N-acyltransferase (347 aa).

Catalysis depends on His241, which acts as the Proton acceptor.

The protein belongs to the transferase hexapeptide repeat family. LpxD subfamily. As to quaternary structure, homotrimer.

It carries out the reaction a UDP-3-O-[(3R)-3-hydroxyacyl]-alpha-D-glucosamine + a (3R)-hydroxyacyl-[ACP] = a UDP-2-N,3-O-bis[(3R)-3-hydroxyacyl]-alpha-D-glucosamine + holo-[ACP] + H(+). It functions in the pathway bacterial outer membrane biogenesis; LPS lipid A biosynthesis. Functionally, catalyzes the N-acylation of UDP-3-O-acylglucosamine using 3-hydroxyacyl-ACP as the acyl donor. Is involved in the biosynthesis of lipid A, a phosphorylated glycolipid that anchors the lipopolysaccharide to the outer membrane of the cell. This Neisseria gonorrhoeae (strain ATCC 700825 / FA 1090) protein is UDP-3-O-acylglucosamine N-acyltransferase.